A 326-amino-acid polypeptide reads, in one-letter code: Nicotianamine synthase 2 (326 aa).

It belongs to the nicotianamine synthase (NAS)-like family. Expressed in roots.

It catalyses the reaction 3 S-adenosyl-L-methionine = nicotianamine + 3 S-methyl-5'-thioadenosine + 3 H(+). Its function is as follows. Synthesizes nicotianamine, a polyamine that is the first intermediate in the synthesis of the phytosiderophores of the mugineic acid type found in gramineae which serve as a sensor for the physiological iron status within the plant, and/or might be involved in the transport of iron. In Oryza sativa subsp. japonica (Rice), this protein is Nicotianamine synthase 2 (NAS2).